The following is a 1079-amino-acid chain: Extracellular calcium-sensing receptor (1079 aa).

An N-terminal signal peptide occupies residues 1-19; it reads MAFSSCCWILLALTWCTSA. Residues 20–610 are Extracellular-facing; it reads YGPDQRAQKK…KEIEFLSWTE (591 aa). Positions 22–188 are ligand-binding 1 (LB1); that stretch reads PDQRAQKKGD…QFKSFLRTIP (167 aa). A disulfide bridge links Cys-60 with Cys-101. 66–70 lines the phosphate pocket; it reads RGFRW. The Ca(2+) site is built by Ile-81, Ser-84, Leu-87, and Leu-88. Asn-90 carries an N-linked (GlcNAc...) asparagine glycan. Position 100 (Thr-100) interacts with Ca(2+). The N-linked (GlcNAc...) asparagine glycan is linked to Asn-130. A Ca(2+)-binding site is contributed by Thr-145. Residues Ser-147, Ala-168, and Ser-170 each contribute to the L-tryptophan site. Ca(2+)-binding residues include Ser-170, Pro-188, Asp-190, Glu-231, and Asp-234. Residues 189-324 are ligand-binding 2 (LB2); that stretch reads NDEHQATAMA…GGTIGFALKA (136 aa). Disulfide bonds link Cys-236–Cys-561, Cys-358–Cys-395, Cys-437–Cys-449, Cys-542–Cys-562, Cys-546–Cys-565, Cys-568–Cys-582, and Cys-585–Cys-598. 2 residues coordinate spermine: Asp-238 and Ser-240. 2 N-linked (GlcNAc...) asparagine glycosylation sites follow: Asn-261 and Asn-287. Glu-297 is a Ca(2+) binding site. Glu-297 contacts L-tryptophan. Residues Asn-386 and Asn-400 are each glycosylated (N-linked (GlcNAc...) asparagine). 415-417 is a binding site for phosphate; it reads RIS. N-linked (GlcNAc...) asparagine glycosylation is found at Asn-446, Asn-468, and Asn-488. Tyr-489 serves as a coordination point for Ca(2+). An N-linked (GlcNAc...) asparagine glycan is attached at Asn-541. Positions 542-612 are cysteine-rich (CR); that stretch reads CSRDCLAGTR…IEFLSWTEPF (71 aa). Gly-557 is a Ca(2+) binding site. N-linked (GlcNAc...) asparagine glycosylation is present at Asn-594. Residues 611–636 form a helical membrane-spanning segment; sequence PFGIALTLFAVLGIFLTAFVLGVFIK. Topologically, residues 637–648 are cytoplasmic; sequence FRNTPIVKATNR. An intracellular loop 1 (ICL1) region spans residues 637 to 648; sequence FRNTPIVKATNR. The helical transmembrane segment at 649 to 668 threads the bilayer; sequence ELSYLLLFSLLCCFSSSLFF. Topologically, residues 669–674 are extracellular; it reads IGEPQD. A helical transmembrane segment spans residues 675–698; sequence WTCRLRQPAFGISFVLCISCILVK. The Cytoplasmic segment spans residues 699–722; sequence TNRVLLVFEAKIPTSFHRKWWGLN. Residues 699 to 722 are intracellular loop 2 (ICL2); the sequence is TNRVLLVFEAKIPTSFHRKWWGLN. The chain crosses the membrane as a helical span at residues 723-745; sequence LQFLLVFLCTFMQIVICAIWLYT. Topologically, residues 746–769 are extracellular; that stretch reads APPSSYRNHELEDEIIFITCHEGS. A helical transmembrane segment spans residues 770–789; the sequence is LMALGFLIGYTCLLAAICFF. Residues 790 to 805 are Cytoplasmic-facing; it reads FAFKSRKLPENFNEAK. Residues 790–805 form an intracellular loop 3 (ICL3) region; sequence FAFKSRKLPENFNEAK. The chain crosses the membrane as a helical span at residues 806–828; the sequence is FITFSMLIFFIVWISFIPAYAST. Over 829–832 the chain is Extracellular; the sequence is YGKF. The helical transmembrane segment at 833 to 854 threads the bilayer; it reads VSAVEVIAILAASFGLLACIFF. The Cytoplasmic portion of the chain corresponds to 855 to 1079; it reads NKVYIILFKP…STVTENMLHS (225 aa). Residues 855–1079 are C-terminus; sequence NKVYIILFKP…STVTENMLHS (225 aa). The interval 880–900 is interaction with RNF19A; it reads AFKVAARATLRRSNVSRQRSS. The residue at position 888 (Thr-888) is a Phosphothreonine. Positions 890-898 are arginine-rich retention motif; sequence RRSNVSRQR. A phosphoserine mark is found at Ser-892, Ser-899, and Ser-920. The segment covering 892–918 has biased composition (low complexity); sequence SNVSRQRSSSLGGSTGSTPSSSISSKS. Residues 892-963 form a disordered region; it reads SNVSRQRSSS…QPQLQQQPRC (72 aa). Pro residues predominate over residues 945–954; sequence PQAPSTPQPQ. Ser-1062 carries the post-translational modification Phosphoserine.

The protein belongs to the G-protein coupled receptor 3 family. As to quaternary structure, homodimer; disulfide-linked. Interacts with VCP. Interacts with ARRB1. In terms of processing, phosphorylation at Thr-888 by PKC impairs coupling with G(q)/G(11) G-proteins, while it does not affect G(i)/G(o)-coupling. Phosphorylation at Ser-892 by PKC and Ser-899 by PKA promote plasma membrane localization. Ubiquitinated by RNF19A; which induces proteasomal degradation.

Its subcellular location is the cell membrane. With respect to regulation, in resting state, adopts an open conformation, anion-binding promoting the inactive configuration. Upon aromatic amino acid-binding, the groove in the extracellular venus flytrap module is closed, thereby inducing the formation of a novel homodimer interface between subunits. Calcium ions stabilize the active state by enhancing homodimer interactions between membrane-proximal domains to fully activate the receptor. Upon activation, the homodimer adopts an asymmetric configuration of the 7-transmembrane region that primes one protomer for G-protein coupling. G-protein binding expands the transmembrane dimer interface; the restriction imposed by the receptor dimer, in combination with intracellular loop 2 (ICL2), enables G-protein activation by facilitating conformational transition of G-protein alpha. Coupling to different classes of G-proteins results in distinct CASR-G-protein interfaces. In contrast to human protein, not activated by AMG 416, a D-amino acid-containing peptide agonist: this is probably due to the absence of a Cys residue at position 482, which forms a disulfide bond with the AMG 416 peptide agonist in human and that is replaced by a Tyr residue in pig. Its function is as follows. G-protein-coupled receptor that senses changes in the extracellular concentration of calcium ions and plays a key role in maintaining calcium homeostasis. Senses fluctuations in the circulating calcium concentration: activated by elevated circulating calcium, leading to decreased parathyroid hormone (PTH) secretion in parathyroid glands. In kidneys, acts as a key regulator of renal tubular calcium resorption. Ligand binding causes a conformation change that triggers signaling via guanine nucleotide-binding proteins (G-proteins) and modulates the activity of downstream effectors. CASR is coupled with different G(q)/G(11), G(i)/G(o)- or G(s)-classes of G-proteins depending on the context. In the parathyroid and kidney, CASR signals through G(q)/G(11) and G(i)/G(o) G-proteins: G(q)/G(11) coupling activates phospholipase C-beta, releasing diacylglycerol (DAG) and inositol 1,4,5-trisphosphate (IP3) second messengers, while G(i)/G(o) coupling mediates inhibition of adenylate cyclase activity. The G-protein-coupled receptor activity is activated by a co-agonist mechanism: aromatic amino acids, such as Trp or Phe, act concertedly with divalent cations, such as calcium or magnesium, to achieve full receptor activation. Acts as an activator of the NLRP3 inflammasome via G(i)/G(o)-mediated signaling: down-regulation of cyclic AMP (cAMP) relieving NLRP3 inhibition by cAMP. Acts as a regulator of proton-sensing receptor GPR68 in a seesaw manner: CASR-mediated signaling inhibits GPR68 signaling in response to extracellular calcium, while GPR68 inhibits CASR in presence of extracellular protons. The polypeptide is Extracellular calcium-sensing receptor (CASR) (Sus scrofa (Pig)).